A 197-amino-acid chain; its full sequence is Protein GrpE (197 aa).

The segment at 1–40 (MSSKEQKTPEGQAPEEIIMDQHEEIEAVEPEASAEQVDPR) is disordered.

This sequence belongs to the GrpE family. As to quaternary structure, homodimer.

It localises to the cytoplasm. Its function is as follows. Participates actively in the response to hyperosmotic and heat shock by preventing the aggregation of stress-denatured proteins, in association with DnaK and GrpE. It is the nucleotide exchange factor for DnaK and may function as a thermosensor. Unfolded proteins bind initially to DnaJ; upon interaction with the DnaJ-bound protein, DnaK hydrolyzes its bound ATP, resulting in the formation of a stable complex. GrpE releases ADP from DnaK; ATP binding to DnaK triggers the release of the substrate protein, thus completing the reaction cycle. Several rounds of ATP-dependent interactions between DnaJ, DnaK and GrpE are required for fully efficient folding. The polypeptide is Protein GrpE (Escherichia coli (strain K12 / DH10B)).